Reading from the N-terminus, the 357-residue chain is NADH-quinone oxidoreductase subunit H (357 aa).

8 helical membrane passes run 26–46 (LVKI…LTLW), 92–112 (ALFV…WAVI), 127–147 (LLFV…AGWA), 164–184 (MISY…VTGS), 203–223 (GLTF…IYII), 259–279 (FFLA…LMFL), 294–314 (VPGW…FIWF), and 329–349 (LGWK…AIWM).

This sequence belongs to the complex I subunit 1 family. In terms of assembly, NDH-1 is composed of 14 different subunits. Subunits NuoA, H, J, K, L, M, N constitute the membrane sector of the complex.

The protein localises to the cell inner membrane. It catalyses the reaction a quinone + NADH + 5 H(+)(in) = a quinol + NAD(+) + 4 H(+)(out). Functionally, NDH-1 shuttles electrons from NADH, via FMN and iron-sulfur (Fe-S) centers, to quinones in the respiratory chain. The immediate electron acceptor for the enzyme in this species is believed to be ubiquinone. Couples the redox reaction to proton translocation (for every two electrons transferred, four hydrogen ions are translocated across the cytoplasmic membrane), and thus conserves the redox energy in a proton gradient. This subunit may bind ubiquinone. The chain is NADH-quinone oxidoreductase subunit H from Janthinobacterium sp. (strain Marseille) (Minibacterium massiliensis).